The following is a 154-amino-acid chain: Putative peroxiredoxin MT1643 (154 aa).

Residues 1–153 enclose the Thioredoxin domain; it reads MKTGDTVADF…ALATLRAIRS (153 aa). The active-site Cysteine sulfenic acid (-SOH) intermediate is the C44. Cysteines 44 and 49 form a disulfide.

It belongs to the peroxiredoxin family. BCP/PrxQ subfamily. As to quaternary structure, monomer.

It catalyses the reaction a hydroperoxide + [thioredoxin]-dithiol = an alcohol + [thioredoxin]-disulfide + H2O. Thiol-specific peroxidase that catalyzes the reduction of hydrogen peroxide and organic hydroperoxides to water and alcohols, respectively. Plays a role in cell protection against oxidative stress by detoxifying peroxides and as sensor of hydrogen peroxide-mediated signaling events. This Mycobacterium tuberculosis (strain CDC 1551 / Oshkosh) protein is Putative peroxiredoxin MT1643 (bcpB).